Here is a 127-residue protein sequence, read N- to C-terminus: Mu-like prophage FluMu protein gp41 (127 aa).

The segment at Val107–Ser127 is disordered. Residues Gly110–Lys121 are compositionally biased toward basic and acidic residues.

It to phage Mu protein gp41.

This Haemophilus influenzae (strain ATCC 51907 / DSM 11121 / KW20 / Rd) protein is Mu-like prophage FluMu protein gp41.